The chain runs to 462 residues: Glycerol-3-phosphate acyltransferase ATS12, chloroplastic (462 aa).

The N-terminal 82 residues, 1–82 (MFILSSSSST…DKESAQSAAT (82 aa)), are a transit peptide targeting the chloroplast. The short motif at 233 to 238 (HQTEAD) is the HXXXXD motif element.

It belongs to the GPAT/DAPAT family.

The protein resides in the plastid. Its subcellular location is the chloroplast stroma. The enzyme catalyses a fatty acyl-[ACP] + sn-glycerol 3-phosphate = a 1-acyl-sn-glycero-3-phosphate + holo-[ACP]. It catalyses the reaction sn-glycerol 3-phosphate + an acyl-CoA = a 1-acyl-sn-glycero-3-phosphate + CoA. It participates in phospholipid metabolism; CDP-diacylglycerol biosynthesis; CDP-diacylglycerol from sn-glycerol 3-phosphate: step 1/3. Its function is as follows. Esterifies the acyl-group from acyl-acyl carrier proteins (acyl-ACPs) to the sn-1 position of glycerol-3-phosphate. The physiological acyl donors in chloroplasts are acyl-ACPs, but acyl-CoAs are used as artificial donor for in vitro reactions. The enzyme from chilling-resistant plants discriminates against non-fluid palmitic acid and selects oleic acid whereas the enzyme from sensitive plants accepts both fatty acids. Squash is chilling-sensitive. Does not seem to discriminate between the acyl-ACP thioesters 18:1-ACP, 18:0-ACP and 16:0-ACP. Exhibits higher selectivity for 16:0-CoA than 18:1-CoA in vitro. This chain is Glycerol-3-phosphate acyltransferase ATS12, chloroplastic, found in Cucurbita moschata (Winter crookneck squash).